Reading from the N-terminus, the 351-residue chain is Very-long-chain 3-oxoacyl-CoA reductase (351 aa).

Residues 26-46 traverse the membrane as a helical segment; it reads LLWCAFTVGAVKLTTFMLSLI. NADP(+)-binding residues include L72, D126, N153, Y225, K229, V258, and S260. The active-site Proton donor is Y225. The active-site Lowers pKa of active site Tyr is the K229.

Belongs to the short-chain dehydrogenases/reductases (SDR) family.

It is found in the endoplasmic reticulum membrane. It carries out the reaction a very-long-chain (3R)-3-hydroxyacyl-CoA + NADP(+) = a very-long-chain 3-oxoacyl-CoA + NADPH + H(+). It participates in lipid metabolism; fatty acid biosynthesis. Functionally, component of the microsomal membrane bound fatty acid elongation system, which produces the 26-carbon very long-chain fatty acids (VLCFA) from palmitate. Catalyzes the reduction of the 3-ketoacyl-CoA intermediate that is formed in each cycle of fatty acid elongation. VLCFAs serve as precursors for ceramide and sphingolipids. This Eremothecium gossypii (strain ATCC 10895 / CBS 109.51 / FGSC 9923 / NRRL Y-1056) (Yeast) protein is Very-long-chain 3-oxoacyl-CoA reductase.